A 91-amino-acid chain; its full sequence is Small ribosomal subunit protein bS16 (91 aa).

This sequence belongs to the bacterial ribosomal protein bS16 family.

The polypeptide is Small ribosomal subunit protein bS16 (Staphylococcus epidermidis (strain ATCC 35984 / DSM 28319 / BCRC 17069 / CCUG 31568 / BM 3577 / RP62A)).